Reading from the N-terminus, the 88-residue chain is Small ribosomal subunit protein bS20 (88 aa).

The protein belongs to the bacterial ribosomal protein bS20 family.

Binds directly to 16S ribosomal RNA. This chain is Small ribosomal subunit protein bS20, found in Bartonella tribocorum (strain CIP 105476 / IBS 506).